The primary structure comprises 238 residues: MTLYIPELPINNTIFPDTSLALSDPDGLLAMGGDLSPQRIIKAYQQGIFPWFSDGQPILWWSPSQRAIIQPNLVHISSSMKKIISKNNFSLSINHAFHDVIDACAAPRGNQNETWITFDMIAAYQKLHQQGIAHSIEVWRDNKLVGGLYGVCIGSVFCGESMFSKEDNTSKIAFIALCQHFDKFKGQLIDCQILTKHLQSFGVQNESRDNFINYLNQYKNININKKCWDKQTIFIKNR.

This sequence belongs to the L/F-transferase family.

Its subcellular location is the cytoplasm. The enzyme catalyses N-terminal L-lysyl-[protein] + L-leucyl-tRNA(Leu) = N-terminal L-leucyl-L-lysyl-[protein] + tRNA(Leu) + H(+). The catalysed reaction is N-terminal L-arginyl-[protein] + L-leucyl-tRNA(Leu) = N-terminal L-leucyl-L-arginyl-[protein] + tRNA(Leu) + H(+). It catalyses the reaction L-phenylalanyl-tRNA(Phe) + an N-terminal L-alpha-aminoacyl-[protein] = an N-terminal L-phenylalanyl-L-alpha-aminoacyl-[protein] + tRNA(Phe). Its function is as follows. Functions in the N-end rule pathway of protein degradation where it conjugates Leu, Phe and, less efficiently, Met from aminoacyl-tRNAs to the N-termini of proteins containing an N-terminal arginine or lysine. This Psychromonas ingrahamii (strain DSM 17664 / CCUG 51855 / 37) protein is Leucyl/phenylalanyl-tRNA--protein transferase.